Here is a 358-residue protein sequence, read N- to C-terminus: Phenylalanine--tRNA ligase alpha subunit (358 aa).

E279 is a binding site for Mg(2+).

It belongs to the class-II aminoacyl-tRNA synthetase family. Phe-tRNA synthetase alpha subunit type 1 subfamily. In terms of assembly, tetramer of two alpha and two beta subunits. Mg(2+) serves as cofactor.

It is found in the cytoplasm. It catalyses the reaction tRNA(Phe) + L-phenylalanine + ATP = L-phenylalanyl-tRNA(Phe) + AMP + diphosphate + H(+). The chain is Phenylalanine--tRNA ligase alpha subunit from Variovorax paradoxus (strain S110).